A 565-amino-acid chain; its full sequence is Sulfite reductase [NADPH] hemoprotein beta-component (565 aa).

C429, C435, C474, and C478 together coordinate [4Fe-4S] cluster. C478 is a siroheme binding site.

The protein belongs to the nitrite and sulfite reductase 4Fe-4S domain family. In terms of assembly, alpha(8)-beta(8). The alpha component is a flavoprotein, the beta component is a hemoprotein. Siroheme serves as cofactor. The cofactor is [4Fe-4S] cluster.

The enzyme catalyses hydrogen sulfide + 3 NADP(+) + 3 H2O = sulfite + 3 NADPH + 4 H(+). The protein operates within sulfur metabolism; hydrogen sulfide biosynthesis; hydrogen sulfide from sulfite (NADPH route): step 1/1. In terms of biological role, component of the sulfite reductase complex that catalyzes the 6-electron reduction of sulfite to sulfide. This is one of several activities required for the biosynthesis of L-cysteine from sulfate. The polypeptide is Sulfite reductase [NADPH] hemoprotein beta-component (Shewanella pealeana (strain ATCC 700345 / ANG-SQ1)).